The following is a 116-amino-acid chain: Ribosome-binding factor A (116 aa).

Belongs to the RbfA family. As to quaternary structure, monomer. Binds 30S ribosomal subunits, but not 50S ribosomal subunits or 70S ribosomes.

The protein localises to the cytoplasm. Its function is as follows. One of several proteins that assist in the late maturation steps of the functional core of the 30S ribosomal subunit. Associates with free 30S ribosomal subunits (but not with 30S subunits that are part of 70S ribosomes or polysomes). Required for efficient processing of 16S rRNA. May interact with the 5'-terminal helix region of 16S rRNA. The chain is Ribosome-binding factor A from Ureaplasma urealyticum serovar 10 (strain ATCC 33699 / Western).